We begin with the raw amino-acid sequence, 148 residues long: Large ribosomal subunit protein bL9 (148 aa).

Belongs to the bacterial ribosomal protein bL9 family.

In terms of biological role, binds to the 23S rRNA. The protein is Large ribosomal subunit protein bL9 of Frankia alni (strain DSM 45986 / CECT 9034 / ACN14a).